A 218-amino-acid chain; its full sequence is Small ribosomal subunit protein mS34 (218 aa).

Positions 180-218 are disordered; that stretch reads KNGDTSTEEPMLNVQRIRMEPWDYPAKQEDKGRAKGTPV. Positions 196–212 are enriched in basic and acidic residues; sequence IRMEPWDYPAKQEDKGR.

Belongs to the mitochondrion-specific ribosomal protein mS34 family. In terms of assembly, component of the mitochondrial small ribosomal subunit (mt-SSU). Mature mammalian 55S mitochondrial ribosomes consist of a small (28S) and a large (39S) subunit. The 28S small subunit contains a 12S ribosomal RNA (12S mt-rRNA) and 30 different proteins. The 39S large subunit contains a 16S rRNA (16S mt-rRNA), a copy of mitochondrial valine transfer RNA (mt-tRNA(Val)), which plays an integral structural role, and 52 different proteins.

Its subcellular location is the mitochondrion. In terms of biological role, required for mitochondrial translation, plays a role in maintaining the stability of the small ribosomal subunit and the 12S rRNA that are required for mitoribosome formation. The polypeptide is Small ribosomal subunit protein mS34 (MRPS34) (Homo sapiens (Human)).